Reading from the N-terminus, the 289-residue chain is Bis(5'-nucleosyl)-tetraphosphatase, symmetrical (289 aa).

The protein belongs to the Ap4A hydrolase family.

It catalyses the reaction P(1),P(4)-bis(5'-adenosyl) tetraphosphate + H2O = 2 ADP + 2 H(+). In terms of biological role, hydrolyzes diadenosine 5',5'''-P1,P4-tetraphosphate to yield ADP. In Yersinia pseudotuberculosis serotype O:1b (strain IP 31758), this protein is Bis(5'-nucleosyl)-tetraphosphatase, symmetrical.